Consider the following 312-residue polypeptide: Olfactory receptor 14C36 (312 aa).

Residues 1–23 (MPNSTTVMEFLLMRFSDVWTLQI) are Extracellular-facing. Asparagine 3 is a glycosylation site (N-linked (GlcNAc...) asparagine). Residues 24-44 (LHSASFFMLYLVTLMGNILIV) form a helical membrane-spanning segment. The Cytoplasmic portion of the chain corresponds to 45 to 52 (TVTTCDSS). A helical membrane pass occupies residues 53 to 73 (LHMPMYFFLRNLSILDACYIS). Topologically, residues 74–97 (VTVPTSCVNSLLDSTTISKAGCVA) are extracellular. An intrachain disulfide couples cysteine 95 to cysteine 187. The chain crosses the membrane as a helical span at residues 98–118 (QVFLVVFFVYVELLFLTIMAH). The Cytoplasmic portion of the chain corresponds to 119-137 (DRYVAVCQPLHYPVIVNSR). Residues 138-158 (ICIQMTLASLLSGLVYAGMHT) traverse the membrane as a helical segment. Topologically, residues 159 to 194 (GSTFQLPFCRSNVIHQFFCDIPSLLKLSCSDTFSNE) are extracellular. The chain crosses the membrane as a helical span at residues 195–215 (VMIVVSALGVGGGCFIFIIRS). The Cytoplasmic portion of the chain corresponds to 216-235 (YIHIFSTVLGFPRGADRTKA). A helical membrane pass occupies residues 236–256 (FSTCIPHILVVSVFLSSCSSV). The Extracellular segment spans residues 257 to 269 (YLRPPAIPAATQD). Residues 270–290 (LILSGFYSIMPPLFNPIIYSL) traverse the membrane as a helical segment. Residues 291-312 (RNKQIKVAIKKIMKRIFYSENV) lie on the Cytoplasmic side of the membrane.

It belongs to the G-protein coupled receptor 1 family.

Its subcellular location is the cell membrane. Functionally, odorant receptor. This chain is Olfactory receptor 14C36 (OR14C36), found in Homo sapiens (Human).